The primary structure comprises 619 residues: Chaperone protein HscA homolog (619 aa).

It belongs to the heat shock protein 70 family.

Chaperone involved in the maturation of iron-sulfur cluster-containing proteins. Has a low intrinsic ATPase activity which is markedly stimulated by HscB. The chain is Chaperone protein HscA homolog from Pseudomonas paraeruginosa (strain DSM 24068 / PA7) (Pseudomonas aeruginosa (strain PA7)).